Reading from the N-terminus, the 189-residue chain is UPF0301 protein PST_3956 (189 aa).

It belongs to the UPF0301 (AlgH) family.

The chain is UPF0301 protein PST_3956 from Stutzerimonas stutzeri (strain A1501) (Pseudomonas stutzeri).